A 495-amino-acid polypeptide reads, in one-letter code: Ankyrin repeat domain-containing protein 34A (495 aa).

4 ANK repeats span residues 4-33, 37-72, 76-106, and 110-139; these read TEGH…YVNE, QGET…DPNI, LGRT…DPSV, and AGAS…AKGT. Position 15 is an N5-methylglutamine (Gln15). Polar residues-rich tracts occupy residues 147 to 162 and 180 to 191; these read DTSP…YLNS and VCTSPSEVQLQT. The interval 147–495 is disordered; sequence DTSPSGTKKT…SLGGPGEPGR (349 aa). The segment covering 203 to 213 has biased composition (basic and acidic residues); sequence AQEEEEKRDVF. The span at 223–232 shows a compositional bias: pro residues; that stretch reads DPSPSEPLPK. The segment covering 233–242 has biased composition (basic residues); it reads PPRHPPKPLK. A Phosphothreonine modification is found at Thr315. The span at 375–385 shows a compositional bias: polar residues; that stretch reads SVSSPRQSQES. Residues 462 to 472 show a composition bias toward basic residues; sequence RTKRKLVRRHS. Over residues 485-495 the composition is skewed to gly residues; sequence QSLGGPGEPGR.

The protein belongs to the ANKRD34 family. In terms of processing, methylated at Gln-15 by N6AMT1.

This chain is Ankyrin repeat domain-containing protein 34A (Ankrd34a), found in Rattus norvegicus (Rat).